Here is a 296-residue protein sequence, read N- to C-terminus: 4-diphosphocytidyl-2-C-methyl-D-erythritol kinase (296 aa).

K18 is a catalytic residue. Residue 102–112 participates in ATP binding; that stretch reads PMGGGIGGGSS. The active site involves D144.

It belongs to the GHMP kinase family. IspE subfamily.

It carries out the reaction 4-CDP-2-C-methyl-D-erythritol + ATP = 4-CDP-2-C-methyl-D-erythritol 2-phosphate + ADP + H(+). Its pathway is isoprenoid biosynthesis; isopentenyl diphosphate biosynthesis via DXP pathway; isopentenyl diphosphate from 1-deoxy-D-xylulose 5-phosphate: step 3/6. Its function is as follows. Catalyzes the phosphorylation of the position 2 hydroxy group of 4-diphosphocytidyl-2C-methyl-D-erythritol. In Vibrio atlanticus (strain LGP32) (Vibrio splendidus (strain Mel32)), this protein is 4-diphosphocytidyl-2-C-methyl-D-erythritol kinase.